Here is a 160-residue protein sequence, read N- to C-terminus: Phosphopantetheine adenylyltransferase (160 aa).

Ser-9 serves as a coordination point for substrate. ATP contacts are provided by residues 9-10 and His-17; that span reads SF. The substrate site is built by Lys-41, Leu-73, and Arg-87. Residues 88–90, Glu-98, and 123–129 each bind ATP; these read GLR and YTFLSSS.

Belongs to the bacterial CoaD family. Homohexamer. It depends on Mg(2+) as a cofactor.

It is found in the cytoplasm. The enzyme catalyses (R)-4'-phosphopantetheine + ATP + H(+) = 3'-dephospho-CoA + diphosphate. It participates in cofactor biosynthesis; coenzyme A biosynthesis; CoA from (R)-pantothenate: step 4/5. Its function is as follows. Reversibly transfers an adenylyl group from ATP to 4'-phosphopantetheine, yielding dephospho-CoA (dPCoA) and pyrophosphate. In Dictyoglomus turgidum (strain DSM 6724 / Z-1310), this protein is Phosphopantetheine adenylyltransferase.